Here is a 190-residue protein sequence, read N- to C-terminus: Movement protein (190 aa).

This sequence belongs to the tombusvirus/aureusvirus movement protein p22 family.

The protein localises to the host membrane. Functionally, transports viral genome to neighboring plant cells directly through plasmosdesmata, without any budding. The movement protein allows efficient cell to cell propagation, by bypassing the host cell wall barrier. This is Movement protein from Cucumber necrosis virus (CNV).